The primary structure comprises 210 residues: Somatotropin-2 (210 aa).

The first 22 residues, 1-22, serve as a signal peptide directing secretion; the sequence is MGQVFLLMPVLLVSCFLGQGAA. Position 38 (H38) interacts with Zn(2+). A disulfide bond links C71 and C183. Position 192 (E192) interacts with Zn(2+). C200 and C208 are oxidised to a cystine.

Belongs to the somatotropin/prolactin family.

The protein resides in the secreted. In terms of biological role, growth hormone plays an important role in growth control and is involved in the regulation of several anabolic processes. Implicated as an osmoregulatory substance important for seawater adaptation. This chain is Somatotropin-2 (gh2), found in Oncorhynchus mykiss (Rainbow trout).